We begin with the raw amino-acid sequence, 176 residues long: Cytochrome b (176 aa).

3 helical membrane passes run 33-53 (FGSLLGVCLAVQILTGLFLAM), 77-98 (WLLRYLHANGASMFFICLYLHV), and 113-133 (WNVGIILLFAVMATAFMGYVL). Heme b is bound by residues histidine 83 and histidine 97.

Belongs to the cytochrome b family. As to quaternary structure, the cytochrome bc1 complex contains 11 subunits: 3 respiratory subunits (MT-CYB, CYC1 and UQCRFS1), 2 core proteins (UQCRC1 and UQCRC2) and 6 low-molecular weight proteins (UQCRH/QCR6, UQCRB/QCR7, UQCRQ/QCR8, UQCR10/QCR9, UQCR11/QCR10 and a cleavage product of UQCRFS1). This cytochrome bc1 complex then forms a dimer. Heme b serves as cofactor.

It is found in the mitochondrion inner membrane. Functionally, component of the ubiquinol-cytochrome c reductase complex (complex III or cytochrome b-c1 complex) that is part of the mitochondrial respiratory chain. The b-c1 complex mediates electron transfer from ubiquinol to cytochrome c. Contributes to the generation of a proton gradient across the mitochondrial membrane that is then used for ATP synthesis. This Tadarida brasiliensis (Brazilian free-tailed bat) protein is Cytochrome b (MT-CYB).